Reading from the N-terminus, the 69-residue chain is Large ribosomal subunit protein uL29 (69 aa).

The protein belongs to the universal ribosomal protein uL29 family.

This is Large ribosomal subunit protein uL29 from Staphylococcus haemolyticus (strain JCSC1435).